We begin with the raw amino-acid sequence, 480 residues long: UDP-N-acetylmuramoylalanine--D-glutamate ligase (480 aa).

ATP is bound at residue 127–133; the sequence is GTNGKTT.

This sequence belongs to the MurCDEF family.

It localises to the cytoplasm. It catalyses the reaction UDP-N-acetyl-alpha-D-muramoyl-L-alanine + D-glutamate + ATP = UDP-N-acetyl-alpha-D-muramoyl-L-alanyl-D-glutamate + ADP + phosphate + H(+). It participates in cell wall biogenesis; peptidoglycan biosynthesis. Cell wall formation. Catalyzes the addition of glutamate to the nucleotide precursor UDP-N-acetylmuramoyl-L-alanine (UMA). This is UDP-N-acetylmuramoylalanine--D-glutamate ligase from Tropheryma whipplei (strain Twist) (Whipple's bacillus).